Consider the following 562-residue polypeptide: Alpha-amylase 2 (562 aa).

Asn-236 is a binding site for Ca(2+). Asp-309 acts as the Nucleophile in catalysis. The active-site Proton donor is Glu-338.

The protein belongs to the glycosyl hydrolase 13 family. In terms of assembly, monomer. The cofactor is Ca(2+).

The protein resides in the cytoplasm. It carries out the reaction Endohydrolysis of (1-&gt;4)-alpha-D-glucosidic linkages in polysaccharides containing three or more (1-&gt;4)-alpha-linked D-glucose units.. The sequence is that of Alpha-amylase 2 (amyB) from Dictyoglomus thermophilum (strain ATCC 35947 / DSM 3960 / H-6-12).